A 160-amino-acid chain; its full sequence is MAESIQSLDQLSQLKGAVTAPDAPKYEKKVDKFGRAYATGKRKDAVARVWIKPGSGKVTVNTRDIEVYFARPVLRMMIEQPMVVAARKGQYDVICTVAGGGLSGQAGAVRHGLSKALTNFEPELRSVLKKGGFLTRDSRVVERKKYGKAKARRSFQFSKR.

It belongs to the universal ribosomal protein uS9 family.

In Bradyrhizobium sp. (strain ORS 278), this protein is Small ribosomal subunit protein uS9.